Consider the following 255-residue polypeptide: Aquaporin TIP4-1 (255 aa).

The next 2 helical transmembrane spans lie at 25–45 (AVLA…SAAM) and 61–81 (TLAA…TAGF). An NPA 1 motif is present at residues 89-91 (NPA). 3 helical membrane-spanning segments follow: residues 108-128 (VLYV…LRFL), 148-168 (GLVM…AMIL), and 176-196 (AIGP…GGNF). Positions 202-204 (NPA) match the NPA 2 motif. A helical membrane pass occupies residues 223–243 (WIGPLLGGPLAGFVYESLFLV).

Belongs to the MIP/aquaporin (TC 1.A.8) family. TIP (TC 1.A.8.10) subfamily.

The protein resides in the vacuole membrane. Functionally, aquaporins facilitate the transport of water and small neutral solutes across cell membranes. In Zea mays (Maize), this protein is Aquaporin TIP4-1 (TIP4-1).